The primary structure comprises 211 residues: Protein-methionine-sulfoxide reductase heme-binding subunit MsrQ (211 aa).

5 consecutive transmembrane segments (helical) span residues 17-37 (LAGL…GLGA), 82-102 (LWCF…ELGV), 116-136 (PYLT…FTST), 153-173 (FVYL…KIIS), and 178-198 (IYAG…LSLF).

It belongs to the MsrQ family. As to quaternary structure, heterodimer of a catalytic subunit (MsrP) and a heme-binding subunit (MsrQ). Requires FMN as cofactor. Heme b is required as a cofactor.

The protein resides in the cell inner membrane. In terms of biological role, part of the MsrPQ system that repairs oxidized periplasmic proteins containing methionine sulfoxide residues (Met-O), using respiratory chain electrons. Thus protects these proteins from oxidative-stress damage caused by reactive species of oxygen and chlorine generated by the host defense mechanisms. MsrPQ is essential for the maintenance of envelope integrity under bleach stress, rescuing a wide series of structurally unrelated periplasmic proteins from methionine oxidation, including the primary periplasmic chaperone SurA and the lipoprotein Pal. MsrQ provides electrons for reduction to the reductase catalytic subunit MsrP, using the quinone pool of the respiratory chain. The polypeptide is Protein-methionine-sulfoxide reductase heme-binding subunit MsrQ (Shigella boydii serotype 4 (strain Sb227)).